A 476-amino-acid chain; its full sequence is UDP-N-acetylmuramate--L-alanine ligase (476 aa).

ATP is bound at residue 121–127; sequence GAHGKTT.

Belongs to the MurCDEF family.

The protein localises to the cytoplasm. It carries out the reaction UDP-N-acetyl-alpha-D-muramate + L-alanine + ATP = UDP-N-acetyl-alpha-D-muramoyl-L-alanine + ADP + phosphate + H(+). Its pathway is cell wall biogenesis; peptidoglycan biosynthesis. Its function is as follows. Cell wall formation. The protein is UDP-N-acetylmuramate--L-alanine ligase of Clavibacter sepedonicus (Clavibacter michiganensis subsp. sepedonicus).